Reading from the N-terminus, the 60-residue chain is Large ribosomal subunit protein bL32 (60 aa).

Positions 1 to 16 are enriched in basic residues; it reads MAVPRNRHSNARKNIR. Residues 1 to 20 form a disordered region; the sequence is MAVPRNRHSNARKNIRRSHD.

It belongs to the bacterial ribosomal protein bL32 family.

The polypeptide is Large ribosomal subunit protein bL32 (rpmF) (Chlamydia pneumoniae (Chlamydophila pneumoniae)).